Consider the following 256-residue polypeptide: MSFHITPIWMWKGTGNNYAYLLTCDKTKITAIVDPAEPESVIPVIKEKTAKKEIDLQYILTTHHHYDHAGGNEDILSYFPSLKVYGGKNASGVTYTPKDKEIFKVGEVQVEALHTPCHTQDSICYYVSSPSKRAVFTGDTLFTSGCGRFFEGDAKQMDYALNHVLAALPDDTVTYPGHEYTKSNAKFSSTIFSTPELTKLVDFCKNHESTTGHFTIGDEKKFNPFMCLGLESVQKAVGSSDPITVMKKLRDMKNAA.

Zn(2+)-binding residues include histidine 63, histidine 65, aspartate 67, histidine 68, histidine 118, and aspartate 139. Residues arginine 148, 178–180 (HEY), and 250–253 (RDMK) contribute to the substrate site. A Zn(2+)-binding site is contributed by histidine 178.

This sequence belongs to the metallo-beta-lactamase superfamily. Glyoxalase II family. Zn(2+) serves as cofactor.

Its subcellular location is the cytoplasm. The protein resides in the nucleus. It carries out the reaction an S-(2-hydroxyacyl)glutathione + H2O = a 2-hydroxy carboxylate + glutathione + H(+). It catalyses the reaction (R)-S-lactoylglutathione + H2O = (R)-lactate + glutathione + H(+). Its pathway is secondary metabolite metabolism; methylglyoxal degradation; (R)-lactate from methylglyoxal: step 2/2. Its function is as follows. Thiolesterase that catalyzes the hydrolysis of S-D-lactoylglutathione to form glutathione and D-lactic acid. Involved in the metabolism of methylglyoxal, a toxic compound for yeast proliferation, by converting methylglyoxal to lactate via S-D-lactoylglutathione by sequential enzyme reactions catalyzed by glyoxalase I and glyoxalase II. This chain is Probable hydroxyacylglutathione hydrolase glo2 (glo2), found in Schizosaccharomyces pombe (strain 972 / ATCC 24843) (Fission yeast).